Reading from the N-terminus, the 538-residue chain is Carotenoid 9,10(9',10')-cleavage dioxygenase 1 (538 aa).

Fe cation is bound by residues His-222, His-270, His-336, and His-523.

This sequence belongs to the carotenoid oxygenase family. As to quaternary structure, homodimer. Fe(2+) is required as a cofactor. High expression in flowers and siliques. Also detected in stems, leaves and roots.

Its subcellular location is the cytoplasm. The catalysed reaction is all-trans-zeaxanthin + 2 O2 = 4,9-dimethyldodeca-2,4,6,8,10-pentaenedial + 2 (3R)-hydroxy-beta-ionone. Cleaves a variety of carotenoids symmetrically at both the 9-10 and 9'-10' double bonds. Active on beta,beta-carotene, lutein, zeaxanthin, all-trans-violaxanthin, 9-cis-violaxanthin and 9'-cis-neoxanthin. With most substrates, the carotenoid is symmetrically cleaved. Probably not involved in abscisic acid biosynthesis. The chain is Carotenoid 9,10(9',10')-cleavage dioxygenase 1 (CCD1) from Arabidopsis thaliana (Mouse-ear cress).